The primary structure comprises 253 residues: Imidazole glycerol phosphate synthase subunit HisF (253 aa).

Residues D11 and D130 contribute to the active site.

The protein belongs to the HisA/HisF family. As to quaternary structure, heterodimer of HisH and HisF.

It localises to the cytoplasm. It carries out the reaction 5-[(5-phospho-1-deoxy-D-ribulos-1-ylimino)methylamino]-1-(5-phospho-beta-D-ribosyl)imidazole-4-carboxamide + L-glutamine = D-erythro-1-(imidazol-4-yl)glycerol 3-phosphate + 5-amino-1-(5-phospho-beta-D-ribosyl)imidazole-4-carboxamide + L-glutamate + H(+). Its pathway is amino-acid biosynthesis; L-histidine biosynthesis; L-histidine from 5-phospho-alpha-D-ribose 1-diphosphate: step 5/9. Its function is as follows. IGPS catalyzes the conversion of PRFAR and glutamine to IGP, AICAR and glutamate. The HisF subunit catalyzes the cyclization activity that produces IGP and AICAR from PRFAR using the ammonia provided by the HisH subunit. This Dehalococcoides mccartyi (strain CBDB1) protein is Imidazole glycerol phosphate synthase subunit HisF.